Here is a 224-residue protein sequence, read N- to C-terminus: MESNTDNYFIFCLYNSKYPHKAIVINENKCSPELSQKITDLKQLSSKIRCVIKDETDHYYVNDNPVENSSRELIDYWMNLLRLVEIDYDSDNFDTAFYDSLTYMYLSDQKYRLMSPNELQTRLSTTKKSDTNNVWCTIVSDVDFDYVPNIIFRYFIVKKSTTDIVSILSELKKVNGVLGINPAKKSSTELDCWGYLRVTSTEVMNRLLSEGFNCANGQIEFDFL.

This is an uncharacterized protein from Acanthamoeba polyphaga mimivirus (APMV).